The sequence spans 459 residues: D(1)-like dopamine receptor (459 aa).

The Extracellular segment spans residues 1-23 (MAQNFSTVGDGKQMLLERDSSKR). Asn4 carries an N-linked (GlcNAc...) asparagine glycan. A helical membrane pass occupies residues 24–49 (VLTGCFLSLLIFTTLLGNTLVCVAVT). Residues 50–60 (KFRHLRSKVTN) are Cytoplasmic-facing. A helical membrane pass occupies residues 61 to 87 (FFVISLAISDLLVAILVMPWKAATEIM). Residues 88–96 (GFWPFGEFC) lie on the Extracellular side of the membrane. Residues Cys96 and Cys187 are joined by a disulfide bond. The chain crosses the membrane as a helical span at residues 97–119 (NIWVAFDIMCSTASILNLCVISV). Over 120–138 (DRYWAISSPFRYERKMTPK) the chain is Cytoplasmic. Residues 139–164 (VACLMISVAWTLSVLISFIPVQLNWH) form a helical membrane-spanning segment. The Extracellular portion of the chain corresponds to 165-191 (KAQTASYVELNGTYAGDLPPDNCDSSL). A helical membrane pass occupies residues 192-216 (NRTYAISSSLISFYIPVAIMIVTYT). Residues 217–269 (RIYRIAQKQIRRISALERAAESAQNRHSSMGNSLSMESECSFKMSFKRETKVL) lie on the Cytoplasmic side of the membrane. A helical transmembrane segment spans residues 270–297 (KTLSVIMGVFVCCWLPFFILNCMVPFCE). At 298 to 311 (ADDTTDFPCISSTT) the chain is on the extracellular side. Residues 312 to 333 (FDVFVWFGWANSSLNPIIYAFN) form a helical membrane-spanning segment. Over 334–459 (ADFRKAFSIL…QNGQHKSMSC (126 aa)) the chain is Cytoplasmic.

It belongs to the G-protein coupled receptor 1 family.

Its subcellular location is the cell membrane. The protein resides in the cell projection. The protein localises to the cilium membrane. Receptor for dopamine. The polypeptide is D(1)-like dopamine receptor (d14) (Takifugu rubripes (Japanese pufferfish)).